Reading from the N-terminus, the 126-residue chain is Large ribosomal subunit protein bL12 (126 aa).

Belongs to the bacterial ribosomal protein bL12 family. Homodimer. Part of the ribosomal stalk of the 50S ribosomal subunit. Forms a multimeric L10(L12)X complex, where L10 forms an elongated spine to which 2 to 4 L12 dimers bind in a sequential fashion. Binds GTP-bound translation factors.

Functionally, forms part of the ribosomal stalk which helps the ribosome interact with GTP-bound translation factors. Is thus essential for accurate translation. This chain is Large ribosomal subunit protein bL12, found in Methylobacterium sp. (strain 4-46).